Here is a 122-residue protein sequence, read N- to C-terminus: Large ribosomal subunit protein uL14 (122 aa).

This sequence belongs to the universal ribosomal protein uL14 family. As to quaternary structure, part of the 50S ribosomal subunit. Forms a cluster with proteins L3 and L19. In the 70S ribosome, L14 and L19 interact and together make contacts with the 16S rRNA in bridges B5 and B8.

Binds to 23S rRNA. Forms part of two intersubunit bridges in the 70S ribosome. The polypeptide is Large ribosomal subunit protein uL14 (Phytoplasma mali (strain AT)).